The chain runs to 67 residues: MSRFWNNVVKFPRFLVSVILGLILTIISPFFVLFRKPSTSFFFIISFTGLLVVLTAIIKKMLNIECC.

This sequence belongs to the ycf33 family.

The protein resides in the plastid. It localises to the chloroplast. This is an uncharacterized protein from Porphyra purpurea (Red seaweed).